Reading from the N-terminus, the 374-residue chain is Cell division protein DivIB (374 aa).

Residues 1-90 (MWKISNENDI…EEEHFADRLP (90 aa)) are disordered. The Cytoplasmic segment spans residues 1–103 (MWKISNENDI…KTRNKRLYRR (103 aa)). A compositionally biased stretch (basic and acidic residues) spans 39 to 53 (YLKKQAEEAASKGEN). Over residues 56–75 (AEVTITLQEQSQEEPQQHLP) the composition is skewed to polar residues. Residues 104–124 (LAFILTCLGTAILVALYFVSP) form a helical membrane-spanning segment. Residues 125–374 (LSRLSEVTVS…GENQEVQQAE (250 aa)) lie on the Extracellular side of the membrane. The region spanning 126 to 197 (SRLSEVTVSG…NSFKIDIQEY (72 aa)) is the POTRA domain. The tract at residues 325-374 (KESEETGSEVSEDSAVENQEVVDPNAGVATDEANNGTPTNGENQEVQQAE) is disordered. Residues 326–339 (ESEETGSEVSEDSA) are compositionally biased toward acidic residues. Residues 356-374 (EANNGTPTNGENQEVQQAE) show a composition bias toward polar residues.

It belongs to the FtsQ/DivIB family. DivIB subfamily.

It is found in the cell membrane. Functionally, cell division protein that may be involved in stabilizing or promoting the assembly of the division complex. The chain is Cell division protein DivIB from Enterococcus faecalis (strain ATCC 700802 / V583).